We begin with the raw amino-acid sequence, 474 residues long: 3-isopropylmalate dehydratase large subunit (474 aa).

The [4Fe-4S] cluster site is built by C350, C415, and C418.

This sequence belongs to the aconitase/IPM isomerase family. LeuC type 1 subfamily. As to quaternary structure, heterodimer of LeuC and LeuD. [4Fe-4S] cluster serves as cofactor.

The catalysed reaction is (2R,3S)-3-isopropylmalate = (2S)-2-isopropylmalate. Its pathway is amino-acid biosynthesis; L-leucine biosynthesis; L-leucine from 3-methyl-2-oxobutanoate: step 2/4. Its function is as follows. Catalyzes the isomerization between 2-isopropylmalate and 3-isopropylmalate, via the formation of 2-isopropylmaleate. In Phenylobacterium zucineum (strain HLK1), this protein is 3-isopropylmalate dehydratase large subunit.